The sequence spans 304 residues: uncharacterized protein (304 aa).

Residues 1 to 25 (MVKTAMLGAVALVIALGGTCGVADA) form the signal peptide. In terms of domain architecture, GP-PDE spans 34-303 (PMIVAHRAGT…DSPLAAQQWR (270 aa)).

This is an uncharacterized protein from Mycobacterium tuberculosis (strain CDC 1551 / Oshkosh).